The sequence spans 56 residues: Ferredoxin (56 aa).

2 consecutive 4Fe-4S ferredoxin-type domains span residues 2-28 (AYKI…SQGD) and 29-56 (TQFV…PVQE). [4Fe-4S] cluster is bound by residues cysteine 9, cysteine 12, cysteine 15, cysteine 19, cysteine 38, cysteine 41, cysteine 44, and cysteine 48.

[4Fe-4S] cluster is required as a cofactor.

Functionally, ferredoxins are iron-sulfur proteins that transfer electrons in a wide variety of metabolic reactions. This chain is Ferredoxin (fer), found in Clostridium perfringens (strain 13 / Type A).